The chain runs to 525 residues: Mitochondrial-processing peptidase subunit alpha (525 aa).

The N-terminal 33 residues, 1–33, are a transit peptide targeting the mitochondrion; that stretch reads MAAMVLAATRLLRGSGSWGRSRPRFGDPAYRRF. K64 carries the N6-succinyllysine modification. Position 299 is an N6-acetyllysine (K299).

The protein belongs to the peptidase M16 family. As to quaternary structure, heterodimer of PMPCA (alpha) and PMPCB (beta) subunits, forming the mitochondrial processing protease (MPP) in which PMPCA is involved in substrate recognition and binding and PMPCB is the catalytic subunit.

It is found in the mitochondrion matrix. The protein resides in the mitochondrion inner membrane. Substrate recognition and binding subunit of the essential mitochondrial processing protease (MPP), which cleaves the mitochondrial sequence off newly imported precursors proteins. In Bos taurus (Bovine), this protein is Mitochondrial-processing peptidase subunit alpha (PMPCA).